The primary structure comprises 564 residues: MTTASAASERAVRQRLVRVARGLEAGDLLVRGAQVVQPATGEVFGADVLVAEGRVAALVGPGLGVRAARTVEARGAYLAPGFLDAHIHIESSLLTPARFAAAVLPRGTTAVVAEPHETVNVMGLSGLRWMLEAGKGSGLRVFGSVPSSVPASPFECGGAVLDAAEVAEALRLPGVLGLAEMMNYPGVLNLERGAWEVLDAGYGGRIDGHAAGVAGRDLQAYAAAGPHSDHEATTPEEARERLRAGLWLMVREGSAARNLEALLPVLRERPRRAMLVSDDVSVDELLSLGHLDRLLRACVAGGLHPADAVALVTCNPAEYWGLHDLGLVAPGYHADFVLLRDLERFEVLDTFVGGVEAQAGSETPPLPGGGVNLGPSWATATFEVPASWPVMQVRPDQITTGVGAPGSGDARLVVADRYGRGEHAACWTSGTGLTGGALAISLLHDAHHVAVLGGSNADVRAAGRALEAMGGGVVVVAGGEVRSNLPLPYAGLMSDLPPQEAAARLSEVTAAARVLGCTLPYPVTTLSFLGLSVIPALKLTPRGLLDVGAWQLLPRETVRVGAEG.

Belongs to the metallo-dependent hydrolases superfamily. Adenine deaminase family. The cofactor is Mn(2+).

The enzyme catalyses adenine + H2O + H(+) = hypoxanthine + NH4(+). The polypeptide is Adenine deaminase (Deinococcus geothermalis (strain DSM 11300 / CIP 105573 / AG-3a)).